The sequence spans 298 residues: Junctional adhesion molecule B (298 aa).

The N-terminal stretch at 1–28 is a signal peptide; sequence MARRSRHRLLLLLLRYLVVALGYHKAYG. The Extracellular segment spans residues 29-238; it reads FSAPKDQQVV…RMQVDDLNIS (210 aa). The 96-residue stretch at 32-127 folds into the Ig-like V-type domain; sequence PKDQQVVTAV…GQNLEEDTVT (96 aa). Cystine bridges form between C50/C109 and C155/C214. N-linked (GlcNAc...) asparagine glycans are attached at residues N98, N187, and N236. The region spanning 134–238 is the Ig-like C2-type domain; sequence PAVPSCEVPS…RMQVDDLNIS (105 aa). Residues 239–259 traverse the membrane as a helical segment; it reads GIIAAVVVVALVISVCGLGVC. Residues 260 to 298 are Cytoplasmic-facing; that stretch reads YAQRKGYFSKETSFQKSNSSSKATTMSENDFKHTKSFII.

Belongs to the immunoglobulin superfamily. Highly expressed in heart, placenta, lung, foreskin and lymph node. Prominently expressed on high endothelial venules and also present on the endothelia of other vessels (at protein level). Also expressed in the brain in the caudate nuclei.

It is found in the cell membrane. The protein localises to the cell junction. The protein resides in the tight junction. Functionally, junctional adhesion protein that mediates heterotypic cell-cell interactions with its cognate receptor JAM3 to regulate different cellular processes. Plays a role in homing and mobilization of hematopoietic stem and progenitor cells within the bone marrow. At the surface of bone marrow stromal cells, it contributes to the retention of the hematopoietic stem and progenitor cells expressing JAM3. Plays a central role in leukocytes extravasation by facilitating not only transmigration but also tethering and rolling of leukocytes along the endothelium. Tethering and rolling of leukocytes are dependent on the binding by JAM2 of the integrin alpha-4/beta-1. Plays a role in spermatogenesis where JAM2 and JAM3, which are respectively expressed by Sertoli and germ cells, mediate an interaction between both cell types and play an essential role in the anchorage of germ cells onto Sertoli cells and the assembly of cell polarity complexes during spermatid differentiation. Also functions as an inhibitory somatodendritic cue that prevents the myelination of non-axonal parts of neurons. During myogenesis, it is involved in myocyte fusion. May also play a role in angiogenesis. This Homo sapiens (Human) protein is Junctional adhesion molecule B.